A 427-amino-acid polypeptide reads, in one-letter code: Fc receptor-like B (427 aa).

Residues methionine 1 to alanine 17 form the signal peptide. Ig-like C2-type domains lie at proline 23–serine 101 and aspartate 103–threonine 189. 2 disulfide bridges follow: cysteine 44/cysteine 85 and cysteine 124/cysteine 168. N-linked (GlcNAc...) asparagine glycosylation is present at asparagine 152. A compositionally biased stretch (polar residues) spans threonine 401–threonine 418. The interval threonine 401–serine 427 is disordered.

As to expression, expressed at low levels. Expressed in B-lymphocytes. Detected in spleen, lymph node, kidney, lung and brain.

It localises to the cytoplasm. The protein localises to the endoplasmic reticulum. This chain is Fc receptor-like B (Fcrlb), found in Mus musculus (Mouse).